Reading from the N-terminus, the 434-residue chain is Serine hydroxymethyltransferase (434 aa).

(6S)-5,6,7,8-tetrahydrofolate is bound by residues leucine 132 and 136–138; that span reads GHL. An N6-(pyridoxal phosphate)lysine modification is found at lysine 241.

Belongs to the SHMT family. As to quaternary structure, homodimer. Requires pyridoxal 5'-phosphate as cofactor.

The protein resides in the cytoplasm. It carries out the reaction (6R)-5,10-methylene-5,6,7,8-tetrahydrofolate + glycine + H2O = (6S)-5,6,7,8-tetrahydrofolate + L-serine. It functions in the pathway one-carbon metabolism; tetrahydrofolate interconversion. Its pathway is amino-acid biosynthesis; glycine biosynthesis; glycine from L-serine: step 1/1. Functionally, catalyzes the reversible interconversion of serine and glycine with tetrahydrofolate (THF) serving as the one-carbon carrier. This reaction serves as the major source of one-carbon groups required for the biosynthesis of purines, thymidylate, methionine, and other important biomolecules. Also exhibits THF-independent aldolase activity toward beta-hydroxyamino acids, producing glycine and aldehydes, via a retro-aldol mechanism. The protein is Serine hydroxymethyltransferase of Kineococcus radiotolerans (strain ATCC BAA-149 / DSM 14245 / SRS30216).